The sequence spans 180 residues: Small ribosomal subunit protein uS4 (180 aa).

The S4 RNA-binding domain occupies 103-174; it reads RRLQTIVYKK…HPERMMIEKA (72 aa).

The protein belongs to the universal ribosomal protein uS4 family. As to quaternary structure, part of the 30S ribosomal subunit. Contacts protein S5. The interaction surface between S4 and S5 is involved in control of translational fidelity.

One of the primary rRNA binding proteins, it binds directly to 16S rRNA where it nucleates assembly of the body of the 30S subunit. In terms of biological role, with S5 and S12 plays an important role in translational accuracy. The chain is Small ribosomal subunit protein uS4 from Pyrococcus abyssi (strain GE5 / Orsay).